We begin with the raw amino-acid sequence, 603 residues long: Alpha-1,2-mannosyltransferase algn-9 (603 aa).

The tract at residues 1-25 is disordered; the sequence is MVTHRRKGGSGPPQKPPPRIVDRSS. Over 1-108 the chain is Lumenal; that stretch reads MVTHRRKGGS…EYSPVYAIRS (108 aa). A helical membrane pass occupies residues 109-129; that stretch reads YFYIYLHYIPASLFANLFGDT. Position 130 (lysine 130) is a topological domain, cytoplasmic. The helical transmembrane segment at 131–151 threads the bilayer; it reads IVVFTLIRLTIGLFCLLGEYY. The Lumenal segment spans residues 152-166; the sequence is AFDAICKKINIATGR. A helical membrane pass occupies residues 167 to 187; sequence FFILFSIFSSGMFLASTAFVP. Residues 188 to 195 lie on the Cytoplasmic side of the membrane; that stretch reads SSFCMAIT. The helical transmembrane segment at 196–216 threads the bilayer; it reads FYILGAYLNENWTAGIFCVAF. The Lumenal segment spans residues 217 to 218; it reads ST. A helical transmembrane segment spans residues 219–239; that stretch reads MVGWPFSAVLGLPIVADMLLL. The Cytoplasmic segment spans residues 240–245; that stretch reads KGLRIR. Residues 246–266 form a helical membrane-spanning segment; it reads FILTSLVIGLCIGGVQVITDS. The Lumenal portion of the chain corresponds to 267–310; the sequence is HYFGKTVLAPLNIFLYNVVSGPGPSLYGEEPLSFYIKNLFNNWN. Residues 311–331 form a helical membrane-spanning segment; sequence IVIFAAPFGFPLSLAYFTKVW. Topologically, residues 332-343 are cytoplasmic; it reads MSQDRNVALYQR. A helical transmembrane segment spans residues 344–364; sequence FAPIILLAVTTAAWLLIFGSQ. Residues 365 to 370 lie on the Lumenal side of the membrane; it reads AHKEER. The helical transmembrane segment at 371-391 threads the bilayer; sequence FLFPIYPFIAFFAALALDATN. The Cytoplasmic segment spans residues 392-397; the sequence is RLCLKK. A helical transmembrane segment spans residues 398–418; it reads LGMDNILSILFILCFAILSAS. The Lumenal segment spans residues 419–603; that stretch reads RTYSIHNNYG…TCTLYRKSNL (185 aa). Residue asparagine 443 is glycosylated (N-linked (GlcNAc...) asparagine).

The protein belongs to the glycosyltransferase 22 family.

The protein localises to the endoplasmic reticulum membrane. The catalysed reaction is an alpha-D-Man-(1-&gt;2)-alpha-D-Man-(1-&gt;2)-alpha-D-Man-(1-&gt;3)-[alpha-D-Man-(1-&gt;3)-alpha-D-Man-(1-&gt;6)]-beta-D-Man-(1-&gt;4)-beta-D-GlcNAc-(1-&gt;4)-alpha-D-GlcNAc-diphospho-di-trans,poly-cis-dolichol + a di-trans,poly-cis-dolichyl beta-D-mannosyl phosphate = an alpha-D-Man-(1-&gt;2)-alpha-D-Man-(1-&gt;2)-alpha-D-Man-(1-&gt;3)-[alpha-D-Man-(1-&gt;2)-alpha-D-Man-(1-&gt;3)-alpha-D-Man-(1-&gt;6)]-beta-D-Man-(1-&gt;4)-beta-D-GlcNAc-(1-&gt;4)-alpha-D-GlcNAc-diphospho-di-trans,poly-cis-dolichol + a di-trans,poly-cis-dolichyl phosphate + H(+). It carries out the reaction an alpha-D-Man-(1-&gt;2)-alpha-D-Man-(1-&gt;2)-alpha-D-Man-(1-&gt;3)-[alpha-D-Man-(1-&gt;2)-alpha-D-Man-(1-&gt;3)-[alpha-D-Man-(1-&gt;6)]-alpha-D-Man-(1-&gt;6)]-beta-D-Man-(1-&gt;4)-beta-D-GlcNAc-(1-&gt;4)-alpha-D-GlcNAc-diphospho-di-trans,poly-cis-dolichol + a di-trans,poly-cis-dolichyl beta-D-mannosyl phosphate = an alpha-D-Man-(1-&gt;2)-alpha-D-Man-(1-&gt;2)-alpha-D-Man-(1-&gt;3)-[alpha-D-Man-(1-&gt;2)-alpha-D-Man-(1-&gt;3)-[alpha-D-Man-(1-&gt;2)-alpha-D-Man-(1-&gt;6)]-alpha-D-Man-(1-&gt;6)]-beta-D-Man-(1-&gt;4)-beta-D-GlcNAc-(1-&gt;4)-alpha-D-GlcNAc-diphospho-di-trans,poly-cis-dolichol + a di-trans,poly-cis-dolichyl phosphate + H(+). It participates in protein modification; protein glycosylation. In terms of biological role, catalyzes the transfer of mannose from Dol-P-Man to lipid-linked oligosaccharides. In Caenorhabditis elegans, this protein is Alpha-1,2-mannosyltransferase algn-9.